The primary structure comprises 485 residues: MSLEEVLDEIRREVTPDPEERELVEGFARRILSEVRDRLKERDPDAEVELIGSVARDTWLPGASDVDVFCVFPKDRDLDEIVEVTLEVGREAIEALGGEAREEYAHHPYIGGEVEHRGRTFEVDVVPCYDTEPGEVITPVDRTPHHNRYVEEHLEDTVEARLLKAFVKAIDAYGAEVRVKGFSGYLCELLAIHYGSFEEVLREAVRTWRPGFVIDLEGFVGEVYEDYDEVRETFEDQDPALIVLDPVDPERNVAAALSRRQLTRFILAARAFLGDPSPEFFRGRKPEPVSGEKVRDWFERNPTHVVAIEVRLPDEVEDIYWPQLEKTARSLSRVLENEGFEVRRWHVMRDSEEEHGYVLLEFEHGKLPELEWRVGPSGWVREDRVRGFVRAHGRFWVEEDGKLATRAERKFVRPEDLLGRLEGADRQTLLSHGFGKDLARSSEGEVRLLSAEELAELADRDPELGKALAEFMRGDPLSELVRDRL.

Positions 53 and 56 each coordinate ATP. Residues Ser-53 and Arg-56 each contribute to the CTP site. Asp-65, Asp-67, and Asp-124 together coordinate Mg(2+). The ATP site is built by His-146, Lys-164, and Tyr-173. Positions 146, 164, and 173 each coordinate CTP.

Belongs to the tRNA nucleotidyltransferase/poly(A) polymerase family. Archaeal CCA-adding enzyme subfamily. As to quaternary structure, homodimer. Mg(2+) serves as cofactor.

The catalysed reaction is a tRNA precursor + 2 CTP + ATP = a tRNA with a 3' CCA end + 3 diphosphate. It carries out the reaction a tRNA with a 3' CCA end + 2 CTP + ATP = a tRNA with a 3' CCACCA end + 3 diphosphate. In terms of biological role, catalyzes the addition and repair of the essential 3'-terminal CCA sequence in tRNAs without using a nucleic acid template. Adds these three nucleotides in the order of C, C, and A to the tRNA nucleotide-73, using CTP and ATP as substrates and producing inorganic pyrophosphate. tRNA 3'-terminal CCA addition is required both for tRNA processing and repair. Also involved in tRNA surveillance by mediating tandem CCA addition to generate a CCACCA at the 3' terminus of unstable tRNAs. While stable tRNAs receive only 3'-terminal CCA, unstable tRNAs are marked with CCACCA and rapidly degraded. This chain is CCA-adding enzyme, found in Methanopyrus kandleri (strain AV19 / DSM 6324 / JCM 9639 / NBRC 100938).